Consider the following 462-residue polypeptide: L-seryl-tRNA(Sec) selenium transferase (462 aa).

At Lys-295 the chain carries N6-(pyridoxal phosphate)lysine.

The protein belongs to the SelA family. As to quaternary structure, homodecamer; pentamer of dimers. Binds only one seryl-tRNA(Sec) per dimer. It depends on pyridoxal 5'-phosphate as a cofactor.

It localises to the cytoplasm. It carries out the reaction L-seryl-tRNA(Sec) + selenophosphate + H(+) = L-selenocysteinyl-tRNA(Sec) + phosphate. It functions in the pathway aminoacyl-tRNA biosynthesis; selenocysteinyl-tRNA(Sec) biosynthesis; selenocysteinyl-tRNA(Sec) from L-seryl-tRNA(Sec) (bacterial route): step 1/1. Converts seryl-tRNA(Sec) to selenocysteinyl-tRNA(Sec) required for selenoprotein biosynthesis. This is L-seryl-tRNA(Sec) selenium transferase from Klebsiella pneumoniae (strain 342).